The sequence spans 150 residues: Ribosomal RNA large subunit methyltransferase H (150 aa).

S-adenosyl-L-methionine is bound by residues Ala-100 and 118 to 123; that span reads LSEMTF.

Belongs to the RNA methyltransferase RlmH family. In terms of assembly, homodimer.

It localises to the cytoplasm. The catalysed reaction is pseudouridine(1915) in 23S rRNA + S-adenosyl-L-methionine = N(3)-methylpseudouridine(1915) in 23S rRNA + S-adenosyl-L-homocysteine + H(+). Functionally, specifically methylates the pseudouridine at position 1915 (m3Psi1915) in 23S rRNA. The sequence is that of Ribosomal RNA large subunit methyltransferase H from Helicobacter pylori (strain ATCC 700392 / 26695) (Campylobacter pylori).